We begin with the raw amino-acid sequence, 739 residues long: Sulfate transporter (739 aa).

Composition is skewed to basic and acidic residues over residues M1–P17 and T31–H46. The interval M1–G47 is disordered. Position 12 is a phosphoserine (S12). 2 helical membrane-spanning segments follow: residues V112–L132 and P137–S157. N-linked (GlcNAc...) asparagine glycosylation is present at N205. 2 consecutive transmembrane segments (helical) span residues F227 to Y247 and G255 to L275. N-linked (GlcNAc...) asparagine glycosylation is present at N357. 4 helical membrane-spanning segments follow: residues L378 to V398, A420 to L440, L455 to F475, and L524 to L544. Residues T568–A719 enclose the STAS domain.

It belongs to the SLC26A/SulP transporter (TC 2.A.53) family. Post-translationally, N-glycosylated. Distributed mainly in the thymus, testis and osteoblastic cells. Highly expressed in the bone, cartilage, kidney and colon.

The protein localises to the cell membrane. It is found in the apical cell membrane. It carries out the reaction oxalate(in) + sulfate(out) = oxalate(out) + sulfate(in). The enzyme catalyses sulfate(out) + 2 chloride(in) = sulfate(in) + 2 chloride(out). It catalyses the reaction oxalate(out) + 2 chloride(in) = oxalate(in) + 2 chloride(out). The catalysed reaction is bromide(in) + chloride(out) = bromide(out) + chloride(in). It carries out the reaction nitrate(in) + chloride(out) = nitrate(out) + chloride(in). The enzyme catalyses iodide(in) + chloride(out) = iodide(out) + chloride(in). Sulfate transporter which mediates sulfate uptake into chondrocytes in order to maintain adequate sulfation of proteoglycans which is needed for cartilage development. Mediates electroneutral anion exchange of sulfate ions for oxalate ions, sulfate and oxalate ions for chloride and/or hydroxyl ions and chloride ions for bromide, iodide and nitrate ions. The coupling of sulfate transport to both hydroxyl and chloride ions likely serves to ensure transport at both acidic pH when most sulfate uptake is mediated by sulfate-hydroxide exchange and alkaline pH when most sulfate uptake is mediated by sulfate-chloride exchange. Essential for chondrocyte proliferation, differentiation and cell size expansion. This is Sulfate transporter (Slc26a2) from Mus musculus (Mouse).